Here is an 86-residue protein sequence, read N- to C-terminus: Large ribosomal subunit protein bL27 (86 aa).

This sequence belongs to the bacterial ribosomal protein bL27 family.

This chain is Large ribosomal subunit protein bL27, found in Flavobacterium psychrophilum (strain ATCC 49511 / DSM 21280 / CIP 103535 / JIP02/86).